The sequence spans 95 residues: Large ribosomal subunit protein bL25 (95 aa).

Belongs to the bacterial ribosomal protein bL25 family. In terms of assembly, part of the 50S ribosomal subunit; part of the 5S rRNA/L5/L18/L25 subcomplex. Contacts the 5S rRNA. Binds to the 5S rRNA independently of L5 and L18.

Functionally, this is one of the proteins that binds to the 5S RNA in the ribosome where it forms part of the central protuberance. This chain is Large ribosomal subunit protein bL25, found in Shewanella baltica (strain OS223).